Reading from the N-terminus, the 346-residue chain is Anthranilate phosphoribosyltransferase (346 aa).

Residues G81, 84–85, 91–94, 109–117, and S121 contribute to the 5-phospho-alpha-D-ribose 1-diphosphate site; these read GD, NVST, and KHGNRSVSS. Residue G81 participates in anthranilate binding. Position 93 (S93) interacts with Mg(2+). N112 is a binding site for anthranilate. R167 lines the anthranilate pocket. 2 residues coordinate Mg(2+): D226 and E227.

The protein belongs to the anthranilate phosphoribosyltransferase family. In terms of assembly, homodimer. Mg(2+) is required as a cofactor.

The enzyme catalyses N-(5-phospho-beta-D-ribosyl)anthranilate + diphosphate = 5-phospho-alpha-D-ribose 1-diphosphate + anthranilate. The protein operates within amino-acid biosynthesis; L-tryptophan biosynthesis; L-tryptophan from chorismate: step 2/5. In terms of biological role, catalyzes the transfer of the phosphoribosyl group of 5-phosphorylribose-1-pyrophosphate (PRPP) to anthranilate to yield N-(5'-phosphoribosyl)-anthranilate (PRA). The protein is Anthranilate phosphoribosyltransferase of Hahella chejuensis (strain KCTC 2396).